The following is a 99-amino-acid chain: Aspartyl/glutamyl-tRNA(Asn/Gln) amidotransferase subunit C (99 aa).

Belongs to the GatC family. In terms of assembly, heterotrimer of A, B and C subunits.

It catalyses the reaction L-glutamyl-tRNA(Gln) + L-glutamine + ATP + H2O = L-glutaminyl-tRNA(Gln) + L-glutamate + ADP + phosphate + H(+). It carries out the reaction L-aspartyl-tRNA(Asn) + L-glutamine + ATP + H2O = L-asparaginyl-tRNA(Asn) + L-glutamate + ADP + phosphate + 2 H(+). Allows the formation of correctly charged Asn-tRNA(Asn) or Gln-tRNA(Gln) through the transamidation of misacylated Asp-tRNA(Asn) or Glu-tRNA(Gln) in organisms which lack either or both of asparaginyl-tRNA or glutaminyl-tRNA synthetases. The reaction takes place in the presence of glutamine and ATP through an activated phospho-Asp-tRNA(Asn) or phospho-Glu-tRNA(Gln). The protein is Aspartyl/glutamyl-tRNA(Asn/Gln) amidotransferase subunit C of Paraburkholderia phymatum (strain DSM 17167 / CIP 108236 / LMG 21445 / STM815) (Burkholderia phymatum).